The following is a 118-amino-acid chain: Large ribosomal subunit protein uL18 (118 aa).

Residues 1 to 25 form a disordered region; that stretch reads MISKPDKNKIRQKRHRRVRGKLSGT. A compositionally biased stretch (basic residues) spans 10-20; it reads IRQKRHRRVRG.

Belongs to the universal ribosomal protein uL18 family. In terms of assembly, part of the 50S ribosomal subunit; part of the 5S rRNA/L5/L18/L25 subcomplex. Contacts the 5S and 23S rRNAs.

Functionally, this is one of the proteins that bind and probably mediate the attachment of the 5S RNA into the large ribosomal subunit, where it forms part of the central protuberance. The sequence is that of Large ribosomal subunit protein uL18 from Streptococcus pyogenes serotype M5 (strain Manfredo).